A 335-amino-acid polypeptide reads, in one-letter code: 7,8-didemethyl-8-hydroxy-5-deazariboflavin synthase (335 aa).

Positions 1–246 (MTYSKNVFIP…QVAPNLIDPK (246 aa)) constitute a Radical SAM core domain. Residues cysteine 15, cysteine 19, and cysteine 22 each contribute to the [4Fe-4S] cluster site.

This sequence belongs to the radical SAM superfamily. CofG family. In terms of assembly, consists of two subunits, CofG and CofH. It depends on [4Fe-4S] cluster as a cofactor.

The catalysed reaction is 5-amino-5-(4-hydroxybenzyl)-6-(D-ribitylimino)-5,6-dihydrouracil + S-adenosyl-L-methionine = 7,8-didemethyl-8-hydroxy-5-deazariboflavin + 5'-deoxyadenosine + L-methionine + NH4(+) + H(+). Its pathway is cofactor biosynthesis; coenzyme F0 biosynthesis. Its function is as follows. Catalyzes the radical-mediated synthesis of 7,8-didemethyl-8-hydroxy-5-deazariboflavin from 5-amino-5-(4-hydroxybenzyl)-6-(D-ribitylimino)-5,6-dihydrouracil. The protein is 7,8-didemethyl-8-hydroxy-5-deazariboflavin synthase of Methanosarcina mazei (strain ATCC BAA-159 / DSM 3647 / Goe1 / Go1 / JCM 11833 / OCM 88) (Methanosarcina frisia).